Reading from the N-terminus, the 84-residue chain is Control protein C.SmaI (84 aa).

An HTH cro/C1-type domain is found at 19 to 73 (VRSYRNINNLSQEQLAEISGLHRTYIGSVERKERNVTLSTLIILAKALNTSVPKL). Positions 30-49 (QEQLAEISGLHRTYIGSVER) form a DNA-binding region, H-T-H motif.

Its function is as follows. May control expression of its associated restriction-modification system SmaI. This chain is Control protein C.SmaI, found in Serratia marcescens.